The primary structure comprises 139 residues: Large-conductance mechanosensitive channel (139 aa).

The next 2 helical transmembrane spans lie at A9 to F29 and I79 to I99.

The protein belongs to the MscL family. As to quaternary structure, homopentamer.

The protein resides in the cell inner membrane. Functionally, channel that opens in response to stretch forces in the membrane lipid bilayer. May participate in the regulation of osmotic pressure changes within the cell. The chain is Large-conductance mechanosensitive channel from Pseudomonas fluorescens (strain SBW25).